Here is a 257-residue protein sequence, read N- to C-terminus: uncharacterized protein (257 aa).

Positions 1-22 are cleaved as a signal peptide; sequence MIHSKRLKMCLCLIILSVFIGA. A lipid anchor (N-palmitoyl cysteine) is attached at C23. C23 carries the S-diacylglycerol cysteine lipid modification.

Belongs to the staphylococcal tandem lipoprotein family.

Its subcellular location is the cell membrane. This is an uncharacterized protein from Staphylococcus aureus (strain MRSA252).